The primary structure comprises 188 residues: Putative manganese efflux pump MntP (188 aa).

6 helical membrane-spanning segments follow: residues 3 to 23 (ITAT…ASIG), 41 to 61 (LIFG…GMLA), 66 to 86 (LEWN…RMII), 107 to 129 (LLVT…LAFL), 143 to 163 (ATLI…PLLG), and 168 to 188 (ILGG…HFHG).

The protein belongs to the MntP (TC 9.B.29) family.

It is found in the cell inner membrane. Functionally, probably functions as a manganese efflux pump. This Citrobacter koseri (strain ATCC BAA-895 / CDC 4225-83 / SGSC4696) protein is Putative manganese efflux pump MntP.